The sequence spans 311 residues: Aspartate carbamoyltransferase catalytic subunit (311 aa).

The carbamoyl phosphate site is built by arginine 55 and threonine 56. Lysine 85 is an L-aspartate binding site. Carbamoyl phosphate contacts are provided by arginine 106, histidine 135, and glutamine 138. L-aspartate contacts are provided by arginine 168 and arginine 230. The carbamoyl phosphate site is built by leucine 268 and proline 269.

This sequence belongs to the aspartate/ornithine carbamoyltransferase superfamily. ATCase family. In terms of assembly, heterododecamer (2C3:3R2) of six catalytic PyrB chains organized as two trimers (C3), and six regulatory PyrI chains organized as three dimers (R2).

It catalyses the reaction carbamoyl phosphate + L-aspartate = N-carbamoyl-L-aspartate + phosphate + H(+). The protein operates within pyrimidine metabolism; UMP biosynthesis via de novo pathway; (S)-dihydroorotate from bicarbonate: step 2/3. Functionally, catalyzes the condensation of carbamoyl phosphate and aspartate to form carbamoyl aspartate and inorganic phosphate, the committed step in the de novo pyrimidine nucleotide biosynthesis pathway. In Yersinia pseudotuberculosis serotype O:1b (strain IP 31758), this protein is Aspartate carbamoyltransferase catalytic subunit.